Here is a 414-residue protein sequence, read N- to C-terminus: Enolase (414 aa).

Gln162 is a binding site for (2R)-2-phosphoglycerate. Catalysis depends on Glu204, which acts as the Proton donor. Asp239, Glu280, and Asp307 together coordinate Mg(2+). (2R)-2-phosphoglycerate-binding residues include Lys332, Arg361, Ser362, and Lys383. The Proton acceptor role is filled by Lys332.

This sequence belongs to the enolase family. It depends on Mg(2+) as a cofactor.

The protein localises to the cytoplasm. It is found in the secreted. The protein resides in the cell surface. It carries out the reaction (2R)-2-phosphoglycerate = phosphoenolpyruvate + H2O. It participates in carbohydrate degradation; glycolysis; pyruvate from D-glyceraldehyde 3-phosphate: step 4/5. Its function is as follows. Catalyzes the reversible conversion of 2-phosphoglycerate (2-PG) into phosphoenolpyruvate (PEP). It is essential for the degradation of carbohydrates via glycolysis. In Campylobacter jejuni subsp. doylei (strain ATCC BAA-1458 / RM4099 / 269.97), this protein is Enolase.